A 378-amino-acid polypeptide reads, in one-letter code: Valine--tRNA ligase (378 aa).

The stretch at Ala307–Ala377 forms a coiled coil.

The protein belongs to the class-I aminoacyl-tRNA synthetase family. ValS type 1 subfamily. As to quaternary structure, monomer.

The protein localises to the cytoplasm. It carries out the reaction tRNA(Val) + L-valine + ATP = L-valyl-tRNA(Val) + AMP + diphosphate. Catalyzes the attachment of valine to tRNA(Val). As ValRS can inadvertently accommodate and process structurally similar amino acids such as threonine, to avoid such errors, it has a 'posttransfer' editing activity that hydrolyzes mischarged Thr-tRNA(Val) in a tRNA-dependent manner. The chain is Valine--tRNA ligase (valS) from Haemophilus parainfluenzae.